The sequence spans 290 residues: Ribosomal RNA small subunit methyltransferase A (290 aa).

Residues Asn27, Leu29, Gly54, Glu75, Asp100, and Asn125 each coordinate S-adenosyl-L-methionine.

It belongs to the class I-like SAM-binding methyltransferase superfamily. rRNA adenine N(6)-methyltransferase family. RsmA subfamily.

It is found in the cytoplasm. It catalyses the reaction adenosine(1518)/adenosine(1519) in 16S rRNA + 4 S-adenosyl-L-methionine = N(6)-dimethyladenosine(1518)/N(6)-dimethyladenosine(1519) in 16S rRNA + 4 S-adenosyl-L-homocysteine + 4 H(+). In terms of biological role, specifically dimethylates two adjacent adenosines (A1518 and A1519) in the loop of a conserved hairpin near the 3'-end of 16S rRNA in the 30S particle. May play a critical role in biogenesis of 30S subunits. The polypeptide is Ribosomal RNA small subunit methyltransferase A (Streptococcus thermophilus (strain ATCC BAA-250 / LMG 18311)).